A 214-amino-acid chain; its full sequence is Adenylate kinase (214 aa).

An ATP-binding site is contributed by 10-15 (GAGKGT). Positions 30–59 (STGDMLRAAIKAGTELGKQAKAVIDAGQLV) are NMP. Residues threonine 31, arginine 36, 57–59 (QLV), 85–88 (GFPR), and glutamine 92 contribute to the AMP site. An LID region spans residues 122–159 (GRRAHLPSGRTYHVVYNPPKVEGKDDVTGEDLVIREDD). Residues arginine 123 and 132–133 (TY) contribute to the ATP site. AMP is bound by residues arginine 156 and arginine 167. Lysine 200 lines the ATP pocket.

The protein belongs to the adenylate kinase family. Monomer.

Its subcellular location is the cytoplasm. It catalyses the reaction AMP + ATP = 2 ADP. It participates in purine metabolism; AMP biosynthesis via salvage pathway; AMP from ADP: step 1/1. Catalyzes the reversible transfer of the terminal phosphate group between ATP and AMP. Plays an important role in cellular energy homeostasis and in adenine nucleotide metabolism. This chain is Adenylate kinase, found in Vibrio cholerae serotype O1 (strain ATCC 39541 / Classical Ogawa 395 / O395).